The primary structure comprises 136 residues: Globin CTP-III (136 aa).

In terms of domain architecture, Globin spans 1 to 136 (LSADQISTVQ…TFFGMIFSKM (136 aa)). His87 provides a ligand contact to heme b.

It belongs to the globin family. Monomer.

The protein is Globin CTP-III of Chironomus thummi piger (Midge).